The primary structure comprises 364 residues: Lysophosphatidic acid receptor 1 (364 aa).

At 1–50 (MAAISTSIPVISQPQFTAMNEPQCFYNESIAFFYNRSGKHLATEWNTVSK) the chain is on the extracellular side. 2 cysteine pairs are disulfide-bonded: C24–C190 and C188–C195. Residues N27 and N35 are each glycosylated (N-linked (GlcNAc...) asparagine). Position 39 (K39) interacts with a 1-acyl-sn-glycero-3-phosphate. A helical transmembrane segment spans residues 51 to 75 (LVMGLGITVCIFIMLANLLVMVAIY). Residues 76 to 83 (VNRRFHFP) lie on the Cytoplasmic side of the membrane. Residues 84-107 (IYYLMANLAAADFFAGLAYFYLMF) traverse the membrane as a helical segment. At 108-121 (NTGPNTRRLTVSTW) the chain is on the extracellular side. A helical transmembrane segment spans residues 122 to 144 (LLRQGLIDTSLTASVANLLAIAI). Position 124–129 (124–129 (RQGLID)) interacts with a 1-acyl-sn-glycero-3-phosphate. The Cytoplasmic portion of the chain corresponds to 145–163 (ERHITVFRMQLHTRMSNRR). A helical transmembrane segment spans residues 164–184 (VVVVIVVIWTMAIVMGAIPSV). Topologically, residues 185-204 (GWNCICDIENCSNMAPLYSD) are extracellular. Residues 205–225 (SYLVFWAIFNLVTFVVMVVLY) traverse the membrane as a helical segment. W210 is an a 1-acyl-sn-glycero-3-phosphate binding site. Topologically, residues 226 to 255 (AHIFGYVRQRTMRMSRHSSGPRRNRDTMMS) are cytoplasmic. The helical transmembrane segment at 256 to 280 (LLKTVVIVLGAFIICWTPGLVLLLL) threads the bilayer. Residues 281–294 (DVCCPQCDVLAYEK) lie on the Extracellular side of the membrane. An intrachain disulfide couples C284 to C287. A helical transmembrane segment spans residues 295–315 (FFLLLAEFNSAMNPIIYSYRD). Residues 316–364 (KEMSATFRQILCCQRSENPTGPTEGSDRSASSLNHTILAGVHSNDHSVV) are Cytoplasmic-facing. S341 bears the Phosphoserine mark. T351 is subject to Phosphothreonine.

Belongs to the G-protein coupled receptor 1 family. In terms of assembly, interacts with RALA and GRK2. Interacts with GNAQ and GNA13. Interacts with CD14; the interaction is enhanced by exposure to bacterial lipopolysaccharide (LPS). Post-translationally, N-glycosylated. In terms of tissue distribution, expressed in many adult organs, including brain, heart, colon, small intestine, placenta, prostate, ovary, pancreas, testes, spleen, skeletal muscle, and kidney. Little or no expression in liver, lung, thymus, or peripheral blood leukocytes. Detected in lung fibroblasts from bronchoalveolar fluid from patients with idiopathic pulmonary fibrosis. Detected in bone marrow-derived mesenchymal stem cells.

The protein localises to the cell surface. It is found in the cell membrane. It localises to the endosome. Its function is as follows. Receptor for lysophosphatidic acid (LPA). Plays a role in the reorganization of the actin cytoskeleton, cell migration, differentiation and proliferation, and thereby contributes to the responses to tissue damage and infectious agents. Activates downstream signaling cascades via the G(i)/G(o), G(12)/G(13), and G(q) families of heteromeric G proteins. Signaling inhibits adenylyl cyclase activity and decreases cellular cAMP levels. Signaling triggers an increase of cytoplasmic Ca(2+) levels. Activates RALA; this leads to the activation of phospholipase C (PLC) and the formation of inositol 1,4,5-trisphosphate. Signaling mediates activation of down-stream MAP kinases. Contributes to the regulation of cell shape. Promotes Rho-dependent reorganization of the actin cytoskeleton in neuronal cells and neurite retraction. Promotes the activation of Rho and the formation of actin stress fibers. Promotes formation of lamellipodia at the leading edge of migrating cells via activation of RAC1. Through its function as LPA receptor, plays a role in chemotaxis and cell migration, including responses to injury and wounding. Plays a role in triggering inflammation in response to bacterial lipopolysaccharide (LPS) via its interaction with CD14. Promotes cell proliferation in response to LPA. Inhibits the intracellular ciliogenesis pathway in response to LPA and through AKT1 activation. Required for normal skeleton development. May play a role in osteoblast differentiation. Required for normal brain development. Required for normal proliferation, survival and maturation of newly formed neurons in the adult dentate gyrus. Plays a role in pain perception and in the initiation of neuropathic pain. In Homo sapiens (Human), this protein is Lysophosphatidic acid receptor 1 (LPAR1).